The chain runs to 312 residues: NADPH-dependent alpha-keto amide reductase (312 aa).

Positions 25, 26, 27, and 59 each coordinate NADPH. Active-site proton donor residues include Y64 and H122. The residue at position 123 (S123) is a Phosphoserine. Residues S157, Q179, S208, L210, T257, T258, S259, S260, K261, and R264 each coordinate NADPH.

This sequence belongs to the aldo/keto reductase family. In terms of assembly, monomer. Post-translationally, the N-terminus is blocked.

It localises to the cytoplasm. The protein resides in the nucleus. In terms of biological role, reduces aromatic alpha-keto amides, aliphatic and aromatic alpha-keto esters, but not beta-keto esters. This Saccharomyces cerevisiae (strain ATCC 204508 / S288c) (Baker's yeast) protein is NADPH-dependent alpha-keto amide reductase.